The sequence spans 473 residues: Membrane-bound acylglycerophosphatidylinositol O-acyltransferase MBOAT7 (473 aa).

Over 1–5 the chain is Cytoplasmic; that stretch reads MTPEE. The chain crosses the membrane as a helical span at residues 6-22; the sequence is WTYLMVLLISIPVGFLF. Residues 23 to 33 are Lumenal-facing; it reads KKAGPGLKRWG. A helical transmembrane segment spans residues 34 to 57; it reads AAAVGLGLTLFTCGPHSLHSLITI. At 58 to 73 the chain is on the cytoplasmic side; that stretch reads LGTWALIQAQPCSCHA. Residues 74-93 traverse the membrane as a helical segment; it reads LALAWTFSYLLFFRALSLLG. Residues 94 to 194 are Lumenal-facing; the sequence is LPTPTPFTNA…VPSLRPLLRR (101 aa). A helical membrane pass occupies residues 195–212; sequence AWPAPLFGLLFLLSSHLF. The Cytoplasmic segment spans residues 213–231; that stretch reads PLEAVREDAFYARPLPTRL. The chain crosses the membrane as a helical span at residues 232–261; sequence FYMIPVFFAFRMRFYVAWIAAECGCIAAGF. The Lumenal segment spans residues 262–426; it reads GAYPVAAKAR…LSMADTLRYW (165 aa). N321 carries an N-linked (GlcNAc...) asparagine glycan. Residues 427-447 traverse the membrane as a helical segment; the sequence is ASIYFWVHFLALACLGLGLVL. Residues 448-473 lie on the Cytoplasmic side of the membrane; that stretch reads GGGSPSKRKTPSQATSSQAKEKLREE. A disordered region spans residues 451–473; it reads SPSKRKTPSQATSSQAKEKLREE.

This sequence belongs to the membrane-bound acyltransferase family. As to quaternary structure, interacts with SPTSSA; the interaction facilitates MBOAT7 location to mitochondria-associated membranes (MAMs).

Its subcellular location is the endoplasmic reticulum membrane. The enzyme catalyses a 1-acyl-sn-glycero-3-phospho-(1D-myo-inositol) + an acyl-CoA = a 1,2-diacyl-sn-glycero-3-phospho-(1D-myo-inositol) + CoA. The catalysed reaction is 1-octadecanoyl-sn-glycero-3-phospho-(1D-myo-inositol) + (5Z,8Z,11Z,14Z)-eicosatetraenoyl-CoA = 1-octadecanoyl-2-(5Z,8Z,11Z,14Z-eicosatetraenoyl)-sn-glycero-3-phospho-(1D-myo-inositol) + CoA. It carries out the reaction a 1-acyl-sn-glycero-3-phospho-(1D-myo-inositol) + (5Z,8Z,11Z,14Z)-eicosatetraenoyl-CoA = a 1-acyl-2-(5Z,8Z,11Z,14Z-eicosatetraenoyl)-sn-glycero-3-phospho-(1D-myo-inositol) + CoA. It catalyses the reaction (5Z,8Z,11Z,14Z)-eicosatetraenoyl-CoA + 1-hexadecanoyl-sn-glycero-3-phosphocholine = 1-hexadecanoyl-2-(5Z,8Z,11Z,14Z-eicosatetraenoyl)-sn-glycero-3-phosphocholine + CoA. The protein operates within lipid metabolism; phospholipid metabolism. In terms of biological role, acyltransferase which catalyzes the transfer of an acyl group from an acyl-CoA to a lysophosphatidylinositol (1-acylglycerophosphatidylinositol or LPI) leading to the production of a phosphatidylinositol (1,2-diacyl-sn-glycero-3-phosphoinositol or PI) and participates in the reacylation step of the phospholipid remodeling pathway also known as the Lands cycle. Prefers arachidonoyl-CoA as the acyl donor, thus contributing to the regulation of free levels arachidonic acid in cell. In liver, participates in the regulation of triglyceride metabolism through the phosphatidylinositol acyl-chain remodeling regulation. The chain is Membrane-bound acylglycerophosphatidylinositol O-acyltransferase MBOAT7 from Mus musculus (Mouse).